The primary structure comprises 225 residues: J-type co-chaperone jac1, mitochondrial (225 aa).

Residues 1–49 (MLKQAGNQSFRPFISFAQKSLFNRQITGNHWIFARFKFYPLNKIVNYNH) constitute a mitochondrion transit peptide. Positions 61–137 (NFYKQFEGDI…LTRAEYILQL (77 aa)) constitute a J domain. Residues 98–100 (HPD) carry the HSP70 binding motif.

It belongs to the HscB family. As to quaternary structure, interacts with ssc1.

Its subcellular location is the mitochondrion matrix. Functionally, co-chaperone required for the assembly of iron-sulfur (Fe/S) clusters in mitochondria. Stimulates the ATPase activity of the mitochondrial Hsp70 chaperone ssc1, to mediate the transfer of iron-sulfur clusters from isu1 to grx5. The polypeptide is J-type co-chaperone jac1, mitochondrial (Schizosaccharomyces pombe (strain 972 / ATCC 24843) (Fission yeast)).